Reading from the N-terminus, the 342-residue chain is Oxygen-dependent coproporphyrinogen-III oxidase (342 aa).

S107 provides a ligand contact to substrate. Positions 111 and 121 each coordinate a divalent metal cation. The active-site Proton donor is the H121. Position 123–125 (123–125) interacts with substrate; sequence NYR. A divalent metal cation is bound by residues H155 and H185. Residues 277-312 form an important for dimerization region; the sequence is YVEFNLVYDRGTIFGLQTNGRTESILMSLPPLVRWE.

The protein belongs to the aerobic coproporphyrinogen-III oxidase family. In terms of assembly, homodimer. Requires a divalent metal cation as cofactor.

It is found in the cytoplasm. The catalysed reaction is coproporphyrinogen III + O2 + 2 H(+) = protoporphyrinogen IX + 2 CO2 + 2 H2O. Its pathway is porphyrin-containing compound metabolism; protoporphyrin-IX biosynthesis; protoporphyrinogen-IX from coproporphyrinogen-III (O2 route): step 1/1. Involved in the heme and chlorophyll biosynthesis. Catalyzes the aerobic oxidative decarboxylation of propionate groups of rings A and B of coproporphyrinogen-III to yield the vinyl groups in protoporphyrinogen-IX. This chain is Oxygen-dependent coproporphyrinogen-III oxidase, found in Synechococcus sp. (strain ATCC 27144 / PCC 6301 / SAUG 1402/1) (Anacystis nidulans).